A 570-amino-acid polypeptide reads, in one-letter code: Vacuolar protein sorting-associated protein 45 (570 aa).

Phosphoserine is present on residues serine 307 and serine 441.

The protein belongs to the STXBP/unc-18/SEC1 family. As to quaternary structure, interacts with STX6 and ZFYVE20. Ubiquitous; expression was highest in testis and in brain. Detected in every part of the brain.

The protein resides in the golgi apparatus membrane. It localises to the endosome membrane. In terms of biological role, may play a role in vesicle-mediated protein trafficking from the Golgi stack through the trans-Golgi network. The protein is Vacuolar protein sorting-associated protein 45 (Vps45) of Rattus norvegicus (Rat).